Reading from the N-terminus, the 313-residue chain is tRNA dimethylallyltransferase (313 aa).

Position 17 to 24 (17 to 24) interacts with ATP; sequence GPTASGKT. Substrate is bound at residue 19–24; it reads TASGKT. Interaction with substrate tRNA stretches follow at residues 42–45, 166–170, and 247–252; these read DSAL, QRLSR, and RCVGYR.

It belongs to the IPP transferase family. In terms of assembly, monomer. The cofactor is Mg(2+).

The catalysed reaction is adenosine(37) in tRNA + dimethylallyl diphosphate = N(6)-dimethylallyladenosine(37) in tRNA + diphosphate. Catalyzes the transfer of a dimethylallyl group onto the adenine at position 37 in tRNAs that read codons beginning with uridine, leading to the formation of N6-(dimethylallyl)adenosine (i(6)A). The sequence is that of tRNA dimethylallyltransferase from Serratia proteamaculans (strain 568).